Consider the following 248-residue polypeptide: 4-hydroxy-tetrahydrodipicolinate reductase (248 aa).

Gly13 to Leu18 contacts NAD(+). Arg36 is a binding site for NADP(+). Residues Gly84–Thr86 and Ala108–Phe111 contribute to the NAD(+) site. His140 (proton donor/acceptor) is an active-site residue. His141 lines the (S)-2,3,4,5-tetrahydrodipicolinate pocket. Lys144 serves as the catalytic Proton donor. Residue Gly150 to Thr151 participates in (S)-2,3,4,5-tetrahydrodipicolinate binding.

Belongs to the DapB family.

The protein resides in the cytoplasm. It carries out the reaction (S)-2,3,4,5-tetrahydrodipicolinate + NAD(+) + H2O = (2S,4S)-4-hydroxy-2,3,4,5-tetrahydrodipicolinate + NADH + H(+). The enzyme catalyses (S)-2,3,4,5-tetrahydrodipicolinate + NADP(+) + H2O = (2S,4S)-4-hydroxy-2,3,4,5-tetrahydrodipicolinate + NADPH + H(+). Its pathway is amino-acid biosynthesis; L-lysine biosynthesis via DAP pathway; (S)-tetrahydrodipicolinate from L-aspartate: step 4/4. Catalyzes the conversion of 4-hydroxy-tetrahydrodipicolinate (HTPA) to tetrahydrodipicolinate. This is 4-hydroxy-tetrahydrodipicolinate reductase from Gluconobacter oxydans (strain 621H) (Gluconobacter suboxydans).